A 214-amino-acid chain; its full sequence is Adenylate kinase (214 aa).

10–15 is a binding site for ATP; sequence GAGKGT. The NMP stretch occupies residues 30–59; that stretch reads STGDMLRAAVKAGTPLGLEAKKVMDAGQLV. Residues T31, R36, 57-59, 85-88, and Q92 contribute to the AMP site; these read QLV and GFPR. The LID stretch occupies residues 122–159; it reads GRRVHSGSGRVYHVVFNPPKVEGKDDVTGEDLSIRPDD. Residues R123 and 132 to 133 each bind ATP; that span reads VY. Residues R156 and R167 each contribute to the AMP site. Position 200 (Q200) interacts with ATP.

The protein belongs to the adenylate kinase family. As to quaternary structure, monomer.

Its subcellular location is the cytoplasm. The catalysed reaction is AMP + ATP = 2 ADP. It functions in the pathway purine metabolism; AMP biosynthesis via salvage pathway; AMP from ADP: step 1/1. Catalyzes the reversible transfer of the terminal phosphate group between ATP and AMP. Plays an important role in cellular energy homeostasis and in adenine nucleotide metabolism. The chain is Adenylate kinase from Shewanella frigidimarina (strain NCIMB 400).